Consider the following 355-residue polypeptide: UDP-N-acetylglucosamine--N-acetylmuramyl-(pentapeptide) pyrophosphoryl-undecaprenol N-acetylglucosamine transferase (355 aa).

UDP-N-acetyl-alpha-D-glucosamine is bound by residues 15–17 (TGG), N127, R163, S191, I244, 263–268 (ALTVSE), and Q288.

This sequence belongs to the glycosyltransferase 28 family. MurG subfamily.

The protein localises to the cell inner membrane. The catalysed reaction is di-trans,octa-cis-undecaprenyl diphospho-N-acetyl-alpha-D-muramoyl-L-alanyl-D-glutamyl-meso-2,6-diaminopimeloyl-D-alanyl-D-alanine + UDP-N-acetyl-alpha-D-glucosamine = di-trans,octa-cis-undecaprenyl diphospho-[N-acetyl-alpha-D-glucosaminyl-(1-&gt;4)]-N-acetyl-alpha-D-muramoyl-L-alanyl-D-glutamyl-meso-2,6-diaminopimeloyl-D-alanyl-D-alanine + UDP + H(+). It participates in cell wall biogenesis; peptidoglycan biosynthesis. Functionally, cell wall formation. Catalyzes the transfer of a GlcNAc subunit on undecaprenyl-pyrophosphoryl-MurNAc-pentapeptide (lipid intermediate I) to form undecaprenyl-pyrophosphoryl-MurNAc-(pentapeptide)GlcNAc (lipid intermediate II). The chain is UDP-N-acetylglucosamine--N-acetylmuramyl-(pentapeptide) pyrophosphoryl-undecaprenol N-acetylglucosamine transferase from Photorhabdus laumondii subsp. laumondii (strain DSM 15139 / CIP 105565 / TT01) (Photorhabdus luminescens subsp. laumondii).